The chain runs to 370 residues: Glutamate 5-kinase (370 aa).

Residue lysine 13 coordinates ATP. Substrate-binding residues include serine 54, aspartate 140, and asparagine 152. Residues 172-173 (SD) and 214-220 (SGGMVTK) each bind ATP. Positions 278-355 (TGTLVLDAGA…GEIEAILGFR (78 aa)) constitute a PUA domain.

It belongs to the glutamate 5-kinase family.

The protein resides in the cytoplasm. The catalysed reaction is L-glutamate + ATP = L-glutamyl 5-phosphate + ADP. It functions in the pathway amino-acid biosynthesis; L-proline biosynthesis; L-glutamate 5-semialdehyde from L-glutamate: step 1/2. In terms of biological role, catalyzes the transfer of a phosphate group to glutamate to form L-glutamate 5-phosphate. In Paramagnetospirillum magneticum (strain ATCC 700264 / AMB-1) (Magnetospirillum magneticum), this protein is Glutamate 5-kinase.